Here is a 236-residue protein sequence, read N- to C-terminus: tRNA (guanine-N(1)-)-methyltransferase (236 aa).

Residues glycine 112 and 132 to 137 (VGDFIL) contribute to the S-adenosyl-L-methionine site.

This sequence belongs to the RNA methyltransferase TrmD family. In terms of assembly, homodimer.

The protein localises to the cytoplasm. It carries out the reaction guanosine(37) in tRNA + S-adenosyl-L-methionine = N(1)-methylguanosine(37) in tRNA + S-adenosyl-L-homocysteine + H(+). Its function is as follows. Specifically methylates guanosine-37 in various tRNAs. The chain is tRNA (guanine-N(1)-)-methyltransferase from Campylobacter curvus (strain 525.92).